A 76-amino-acid polypeptide reads, in one-letter code: MKFALFSVLVVLLIATFVAADECPRICTADYRPVCGTPSGGRRSANRTFGNQCSLNAHNCLNKGDTYDKLHDGECK.

The N-terminal stretch at 1–20 is a signal peptide; the sequence is MKFALFSVLVVLLIATFVAA. Positions 21-76 constitute a Kazal-like domain; that stretch reads DECPRICTADYRPVCGTPSGGRRSANRTFGNQCSLNAHNCLNKGDTYDKLHDGECK. 3 disulfide bridges follow: Cys-23–Cys-60, Cys-27–Cys-53, and Cys-35–Cys-75.

In terms of tissue distribution, expressed by the salivary gland.

Its subcellular location is the secreted. Its function is as follows. Vasodilator protein that inhibits vasoconstriction of isolated rat femoral artery induced by phenylephrine. Since platelet aggregation and vasoconstriction are key hemostatic responses, particularly in small wounds, this protein likely participates in the antihemostatic responses during blood feeding. Blocks L-type calcium channels (Cav1/CACNA1) in left ventricular myocytes isolated from rat hearts. The chain is Vasotab from Hybomitra bimaculata (Horse fly).